A 715-amino-acid polypeptide reads, in one-letter code: Beta-galactosidase 9 (715 aa).

The first 20 residues, 1–20 (MSGGAVAFLLLVAAAAVANA), serve as a signal peptide directing secretion. Glu-178 acts as the Proton donor in catalysis. Glu-247 acts as the Nucleophile in catalysis.

This sequence belongs to the glycosyl hydrolase 35 family.

The protein localises to the secreted. Its subcellular location is the extracellular space. It is found in the apoplast. The catalysed reaction is Hydrolysis of terminal non-reducing beta-D-galactose residues in beta-D-galactosides.. This Oryza sativa subsp. japonica (Rice) protein is Beta-galactosidase 9.